The chain runs to 189 residues: UPF0301 protein HRM2_24640 (189 aa).

The protein belongs to the UPF0301 (AlgH) family.

In Desulforapulum autotrophicum (strain ATCC 43914 / DSM 3382 / VKM B-1955 / HRM2) (Desulfobacterium autotrophicum), this protein is UPF0301 protein HRM2_24640.